A 360-amino-acid polypeptide reads, in one-letter code: DNA replication and repair protein RecF (360 aa).

Residue 30-37 (GQNGSGKT) coordinates ATP.

The protein belongs to the RecF family.

It is found in the cytoplasm. Functionally, the RecF protein is involved in DNA metabolism; it is required for DNA replication and normal SOS inducibility. RecF binds preferentially to single-stranded, linear DNA. It also seems to bind ATP. The protein is DNA replication and repair protein RecF of Shewanella baltica (strain OS155 / ATCC BAA-1091).